Reading from the N-terminus, the 490-residue chain is 5'-3' exonuclease PLD3 (490 aa).

Topologically, residues 1–38 are cytoplasmic; it reads MKPKLMYQELKVPAEEPANELPMNEIEAWKAAEKKARW. Residues 39 to 59 traverse the membrane as a helical; Signal-anchor for type II membrane protein segment; that stretch reads VLLVLILAVVGFGALMTQLFL. At 60-490 the chain is on the lumenal side; that stretch reads WEYGDLHLFG…DSVGNACRLL (431 aa). Cystine bridges form between cysteine 77–cysteine 239 and cysteine 81–cysteine 237. Asparagine 97 and asparagine 132 each carry an N-linked (GlcNAc...) asparagine glycan. Residues 196-223 enclose the PLD phosphodiesterase 1 domain; it reads THGVLHTKFWVVDQTHFYLGSANMDWRS. Active-site residues include histidine 201, lysine 203, and aspartate 208. The Proton donor role is filled by histidine 201. 2 residues coordinate phosphate: histidine 201 and lysine 203. Asparagine 218 lines the phosphate pocket. Asparagine 236, asparagine 284, and asparagine 387 each carry an N-linked (GlcNAc...) asparagine glycan. Cysteine 366 and cysteine 487 are disulfide-bonded. Residues 411–437 form the PLD phosphodiesterase 2 domain; it reads YARVNHNKYMVTERATYIGTSNWSGNY. Residue histidine 416 coordinates phosphate. Histidine 416 serves as the catalytic Nucleophile. Phenylalanine 438 contributes to the Mg(2+) binding site.

It belongs to the phospholipase D family. As to quaternary structure, homodimer. Interacts with APP. In terms of processing, N-glycosylated. Post-translationally, proteolytically processed to a soluble form that is stable within endosomes and lysosomes. During transport through the secretory pathway becomes proteolysed by cysteine proteases, thereby releasing a stable soluble lysosomal lumenal polypeptide, whereas the transmembrane-bound fragment is rapidly degraded. Its transport route to lysosomes involves ubiquitination and the ESCRT complex. Ubiquitinated. Ubiquitination mediates sorting into lysosomes.

The protein resides in the endoplasmic reticulum membrane. It is found in the lysosome lumen. It localises to the early endosome membrane. The protein localises to the late endosome membrane. Its subcellular location is the golgi apparatus membrane. The protein resides in the endosome membrane. The enzyme catalyses Exonucleolytic cleavage in the 5'- to 3'-direction to yield nucleoside 3'-phosphates.. It carries out the reaction a 5'-end 5'-dephospho-ribonucleotidyl-ribonucleotide-RNA + H2O = a ribonucleoside 3'-phosphate + a 5'-end dephospho-ribonucleoside-RNA + H(+). It catalyses the reaction a ribonucleoside 3'-phosphate-2'-3'-cyclophospho-GMP + H2O = a ribonucleoside 3'-phosphate + 2',3'-cyclophospho-GMP + H(+). The catalysed reaction is a 5'-end 5'-dephospho-2'-deoxyribonucleotidyl-2'-deoxyribonucleotide in single-stranded DNA + H2O = a 5'-end dephospho-2'-deoxyribonucleoside in single-stranded DNA + a 2'-deoxyribonucleoside 3'-phosphate + H(+). The enzyme catalyses a 5'-end 5'-phospho-2'-deoxyribonucleotide in single-stranded DNA + H2O = a 5'-end 5'-dephospho-2'-deoxyribonucleotide in single-stranded DNA + phosphate. It carries out the reaction a 3-lyso-sn-glycero-1-phospho-(3'-acyl-1'-sn-glycerol) + a 1-acyl-sn-glycerol = a 3-acyl-sn-glycero-1-phospho-(3'-acyl-1'-sn-glycerol) + glycerol. It catalyses the reaction 3-lyso-sn-glycero-1-phospho-(3'-(9Z-octadecenoyl)-1'-sn-glycerol) + 1-(9Z-octadecenoyl)-sn-glycerol = 3-(9Z-octadecenoyl)-sn-glycero-1-phospho-(3'-(9Z-octadecenoyl)-1'-sn-glycerol) + glycerol. 5'-&gt;3' exonuclease that hydrolyzes the phosphodiester bond of single-stranded DNA (ssDNA) and RNA molecules to form nucleoside 3'-monophosphates and 5'-end 5'-hydroxy deoxyribonucleotide/ribonucleotide fragments. Partially redundant with PLD4, can cleave all four nucleotides displaying higher efficiency for ssDNA and RNA fragments initiated with uridine and guanosine residues and lower efficiency for cytidine-initiated substrates. As a result, it does not always degrade polynucleotides to the single nucleotide level, it can stall at specific sites sparing certain fragments from exonucleolytic degradation. Processes self and pathogenic ssDNA and RNA molecules that reach the endolysosomal compartment via phagocytosis or autophagy and may serve as 'danger' signals for recognition by innate immune receptors such as toll-like receptors (TLRs). Degrades mitochondrial CpG-rich ssDNA fragments to prevent TLR9 activation and autoinflammatory response, but it can cleave viral RNA to generate ligands for TLR7 activation and initiate antiviral immune responses. In plasmacytoid dendritic cells, it cooperates with endonuclease RNASET2 to release 2',3'-cyclic guanosine monophosphate (2',3'-cGMP), a potent stimulatory ligand for TLR7. Produces 2',3'-cGMPs and cytidine-rich RNA fragments that occupy TLR7 ligand-binding pockets and trigger a signaling-competent state. Can exert polynucleotide phosphatase activity toward 5'-phosphorylated ssDNA substrates although at a slow rate. Transphosphatidylase that catalyzes the exchange with R to S stereo-inversion of the glycerol moiety between (S,R)-lysophosphatidylglycerol (LPG) and monoacylglycerol (MAG) substrates to yield (S,S)-bis(monoacylglycero)phosphate (BMP). Can synthesize a variety of (S,S)-BMPs representing the main phospholipid constituent of lysosomal intralumenal vesicle (ILV) membranes that bind acid hydrolases for lipid degradation. Regulates the homeostasis and interorganellar communication of the endolysosomal system with an overall impact on cellular removal of dysfunctional organelles via autophagy as well as proper protein and lipid turnover. May play a role in myotube formation in response to ER stress. In Pongo abelii (Sumatran orangutan), this protein is 5'-3' exonuclease PLD3 (PLD3).